The sequence spans 631 residues: 1-deoxy-D-xylulose-5-phosphate synthase (631 aa).

Thiamine diphosphate is bound by residues His87 and Gly128–Ser130. Asp159 provides a ligand contact to Mg(2+). Thiamine diphosphate contacts are provided by residues Gly160 to Ala161, Asn188, Phe295, and Glu378. Asn188 contributes to the Mg(2+) binding site.

This sequence belongs to the transketolase family. DXPS subfamily. As to quaternary structure, homodimer. It depends on Mg(2+) as a cofactor. Thiamine diphosphate is required as a cofactor.

The enzyme catalyses D-glyceraldehyde 3-phosphate + pyruvate + H(+) = 1-deoxy-D-xylulose 5-phosphate + CO2. Its pathway is metabolic intermediate biosynthesis; 1-deoxy-D-xylulose 5-phosphate biosynthesis; 1-deoxy-D-xylulose 5-phosphate from D-glyceraldehyde 3-phosphate and pyruvate: step 1/1. Its function is as follows. Catalyzes the acyloin condensation reaction between C atoms 2 and 3 of pyruvate and glyceraldehyde 3-phosphate to yield 1-deoxy-D-xylulose-5-phosphate (DXP). The chain is 1-deoxy-D-xylulose-5-phosphate synthase from Pseudomonas syringae pv. tomato (strain ATCC BAA-871 / DC3000).